The following is a 181-amino-acid chain: MFKKFDDKENVSNCIQLKTSVIKGIKNQLIDQFPVIEQWLNQIMPKKDPVKIVRCHEHIEILTVNGELLFFRQREGSFYPTLRLLHKYPFILPHQQVDKGAIKFVLSGANIMCPGLTSPGAKLYPAAAETVVAIMAEGKQHALCVGVMKMSADDIEKVNKGIGIENIHYLNDGLWHMKTYK.

The 80-residue stretch at 92-171 (LPHQQVDKGA…IGIENIHYLN (80 aa)) folds into the PUA domain.

It belongs to the MCTS1 family.

The protein localises to the cytoplasm. Plays a role as translation enhancer and involved in cell cycle regulation. The sequence is that of Malignant T-cell-amplified sequence 1-B (mcts1-b) from Xenopus laevis (African clawed frog).